We begin with the raw amino-acid sequence, 488 residues long: Alkaline nuclease (488 aa).

Belongs to the herpesviridae alkaline nuclease family. In terms of assembly, interacts with major DNA-binding protein; this interaction increases the nuclease processivity of the alkaline exonuclease.

Its subcellular location is the host nucleus. It localises to the host cytoplasm. Its function is as follows. Plays a role in processing non linear or branched viral DNA intermediates in order to promote the production of mature packaged unit-length linear progeny viral DNA molecules. Exhibits endonuclease and exonuclease activities and accepts both double-stranded and single-stranded DNA as substrate. Exonuclease digestion of DNA is in the 5'-&gt; 3' direction and the products are 5'-monophosphate nucleosides. Additionally, forms a recombinase with the major DNA-binding protein, which displays strand exchange activity. This is Alkaline nuclease (U70) from Homo sapiens (Human).